We begin with the raw amino-acid sequence, 123 residues long: ATP synthase epsilon chain (123 aa).

Belongs to the ATPase epsilon chain family. As to quaternary structure, F-type ATPases have 2 components, CF(1) - the catalytic core - and CF(0) - the membrane proton channel. CF(1) has five subunits: alpha(3), beta(3), gamma(1), delta(1), epsilon(1). CF(0) has three main subunits: a, b and c.

Its subcellular location is the cell inner membrane. Functionally, produces ATP from ADP in the presence of a proton gradient across the membrane. This Helicobacter pylori (strain ATCC 700392 / 26695) (Campylobacter pylori) protein is ATP synthase epsilon chain (atpC).